We begin with the raw amino-acid sequence, 333 residues long: PDZ domain-containing protein GIPC1 (333 aa).

The segment covering Met-1–Ala-11 has biased composition (basic residues). A disordered region spans residues Met-1–Arg-55. The span at Leu-27–Ala-40 shows a compositional bias: gly residues. Ser-68 is modified (phosphoserine). The PDZ domain maps to Glu-133 to Glu-213. The interval Ile-221–Arg-244 is disordered. Residues Ser-222, Ser-225, and Ser-232 each carry the phosphoserine modification. Gly residues predominate over residues Gly-228–Arg-240. Residue Thr-242 is modified to Phosphothreonine. A Phosphoserine modification is found at Ser-247.

Belongs to the GIPC family. In terms of assembly, interacts with SDC4/syndecan-4 and SEMA4C/semaphorin-4C. Interacts with RGS19 (C-terminus), GLUT1 (C-terminus), ACTN1, KIF1B, MYO6 and PLEKHG5. Widely expressed.

The protein resides in the cytoplasm. It is found in the membrane. Functionally, may be involved in G protein-linked signaling. The chain is PDZ domain-containing protein GIPC1 (Gipc1) from Rattus norvegicus (Rat).